The primary structure comprises 529 residues: Peptide chain release factor 3 (529 aa).

The tr-type G domain maps to 11–280; it reads NSRRTFAIIS…AFINWAPEPK (270 aa). GTP-binding positions include 20 to 27, 88 to 92, and 142 to 145; these read SHPDAGKT, DTPGH, and NKMD.

It belongs to the TRAFAC class translation factor GTPase superfamily. Classic translation factor GTPase family. PrfC subfamily.

It localises to the cytoplasm. Its function is as follows. Increases the formation of ribosomal termination complexes and stimulates activities of RF-1 and RF-2. It binds guanine nucleotides and has strong preference for UGA stop codons. It may interact directly with the ribosome. The stimulation of RF-1 and RF-2 is significantly reduced by GTP and GDP, but not by GMP. This Acinetobacter baylyi (strain ATCC 33305 / BD413 / ADP1) protein is Peptide chain release factor 3.